The chain runs to 948 residues: Translation initiation factor IF-2 (948 aa).

Disordered regions lie at residues 61–120, 162–243, and 255–285; these read IQAN…PALI, KSRE…TQSA, and QEKD…SHKI. Residues 68-78 are compositionally biased toward basic and acidic residues; it reads KNPEQDNKDDL. Low complexity predominate over residues 173–189; the sequence is SNTNNANSTNNANNVNN. Over residues 190-207 the composition is skewed to basic and acidic residues; that stretch reads AKKEISEVKKQEQEIKRH. Positions 208–219 are enriched in basic residues; sequence ENIKRRTGFRVI. Over residues 230–243 the composition is skewed to polar residues; sequence ENSVAESKKPTQSA. In terms of domain architecture, tr-type G spans 447-616; sequence ERPPVVTIMG…LIQADIMELK (170 aa). Positions 456 to 463 are G1; the sequence is GHVDHGKT. Residue 456–463 coordinates GTP; sequence GHVDHGKT. The segment at 481-485 is G2; sequence GITQH. Positions 502-505 are G3; the sequence is DTPG. GTP-binding positions include 502-506 and 556-559; these read DTPGH and NKMD. A G4 region spans residues 556-559; sequence NKMD. Residues 592 to 594 form a G5 region; that stretch reads SAK.

Belongs to the TRAFAC class translation factor GTPase superfamily. Classic translation factor GTPase family. IF-2 subfamily.

It is found in the cytoplasm. Its function is as follows. One of the essential components for the initiation of protein synthesis. Protects formylmethionyl-tRNA from spontaneous hydrolysis and promotes its binding to the 30S ribosomal subunits. Also involved in the hydrolysis of GTP during the formation of the 70S ribosomal complex. The sequence is that of Translation initiation factor IF-2 from Helicobacter pylori (strain Shi470).